The chain runs to 88 residues: Small ribosomal subunit protein bS20 (88 aa).

A compositionally biased stretch (basic and acidic residues) spans 1 to 17; the sequence is MANIKSNEKRLRQDIKR. The interval 1-25 is disordered; the sequence is MANIKSNEKRLRQDIKRNLNNKGQK.

This sequence belongs to the bacterial ribosomal protein bS20 family.

Functionally, binds directly to 16S ribosomal RNA. This is Small ribosomal subunit protein bS20 from Mycoplasma genitalium (strain ATCC 33530 / DSM 19775 / NCTC 10195 / G37) (Mycoplasmoides genitalium).